Here is a 493-residue protein sequence, read N- to C-terminus: Lysine--tRNA ligase (493 aa).

E402 and E409 together coordinate Mg(2+).

It belongs to the class-II aminoacyl-tRNA synthetase family. In terms of assembly, homodimer. Requires Mg(2+) as cofactor.

It localises to the cytoplasm. The enzyme catalyses tRNA(Lys) + L-lysine + ATP = L-lysyl-tRNA(Lys) + AMP + diphosphate. The chain is Lysine--tRNA ligase from Fusobacterium nucleatum subsp. nucleatum (strain ATCC 25586 / DSM 15643 / BCRC 10681 / CIP 101130 / JCM 8532 / KCTC 2640 / LMG 13131 / VPI 4355).